We begin with the raw amino-acid sequence, 217 residues long: Glycosylphosphatidylinositol anchor biosynthesis protein 11 (217 aa).

Residue Asn20 is glycosylated (N-linked (GlcNAc...) asparagine). The next 6 helical transmembrane spans lie at Val41–Phe61, Asp66–Phe86, Phe107–Phe127, Trp139–Cys159, Tyr169–Asp189, and Val197–Ile217.

This sequence belongs to the PIGF family.

The protein resides in the endoplasmic reticulum membrane. Its pathway is glycolipid biosynthesis; glycosylphosphatidylinositol-anchor biosynthesis. Acts in the GPI biosynthetic pathway between GlcNAc-PI synthesis and GPI transfer to protein. This is Glycosylphosphatidylinositol anchor biosynthesis protein 11 (GPI11) from Kluyveromyces lactis (strain ATCC 8585 / CBS 2359 / DSM 70799 / NBRC 1267 / NRRL Y-1140 / WM37) (Yeast).